The following is a 353-amino-acid chain: Guanine nucleotide-binding protein alpha-3 subunit (353 aa).

Gly-2 carries the N-myristoyl glycine lipid modification. Cys-4 is lipidated: S-palmitoyl cysteine. A G-alpha domain is found at Lys-32–Leu-353. The interval Lys-35 to Thr-48 is G1 motif. Residues Gly-40–Ser-47, Leu-176–Thr-182, Asp-201–Gln-205, Asn-270–Asp-273, and Ala-326 contribute to the GTP site. 2 residues coordinate Mg(2+): Ser-47 and Thr-182. The tract at residues Asp-174 to Thr-182 is G2 motif. The G3 motif stretch occupies residues Phe-197–Arg-206. Positions Ile-266–Asp-273 are G4 motif. Residues Thr-324–Thr-329 are G5 motif.

It belongs to the G-alpha family. G(q) subfamily. G proteins are composed of 3 units; alpha, beta and gamma. The alpha chain contains the guanine nucleotide binding site.

Its function is as follows. Guanine nucleotide-binding proteins (G proteins) are involved as modulators or transducers in various transmembrane signaling systems. Promotes transcription of 3',5'-cyclic phosphodiesterases pde-1 and pde-5, leading to reduced cGMP levels in sensory neurons. This causes suppression of insulin production and signaling which leads to increased daf-16 activity and contributes to increased adult lifespan and resistance to oxidative stress. In addition, by reducing cGMP levels, inhibits TGF-beta signaling pathways. Involved in behavioral response to P.aeruginosa by controlling the expression of daf-7, a member of the TGF-beta family, in ASJ sensory neurons. Plays a role in the avoidance response to the noxious chemical quinine in ASH sensory neurons. This chain is Guanine nucleotide-binding protein alpha-3 subunit, found in Caenorhabditis elegans.